We begin with the raw amino-acid sequence, 304 residues long: MYNLYCTYMTGKRENVLIEALPYIREFHDSVMVIKVGGHAMVDPQVMSDIVQDIVLLRFVGIHPVIVHGGGPEITEKMDRMGKKSEFIGGLRITDDETMEIARMVLVGNINTRIVSLISKHGGKGVGLSGKDGNMILAKKKPTQKILIEDIEHDVDLGWVGDTEIINPEIINIVTANGYIPVISPIAMDSEGNALNINADTVAGDLADALNAKKLILMTDVPGVLRDQTDISTRISRIGVDEVEQLIEDGVLSGGMIPKMRSAKASVEGGVDRVHVIDGSISHSVLLELFTDQGIGTMVYKDTK.

Residues 70–71 (GG), arginine 92, and asparagine 196 contribute to the substrate site.

The protein belongs to the acetylglutamate kinase family. ArgB subfamily.

Its subcellular location is the cytoplasm. It catalyses the reaction N-acetyl-L-glutamate + ATP = N-acetyl-L-glutamyl 5-phosphate + ADP. It functions in the pathway amino-acid biosynthesis; L-arginine biosynthesis; N(2)-acetyl-L-ornithine from L-glutamate: step 2/4. In terms of biological role, catalyzes the ATP-dependent phosphorylation of N-acetyl-L-glutamate. The chain is Acetylglutamate kinase from Methanococcoides burtonii (strain DSM 6242 / NBRC 107633 / OCM 468 / ACE-M).